Reading from the N-terminus, the 312-residue chain is tRNA dimethylallyltransferase (312 aa).

11-18 (GATATGKT) is a binding site for ATP. 13–18 (TATGKT) lines the substrate pocket. The interval 36–39 (DSRQ) is interaction with substrate tRNA.

It belongs to the IPP transferase family. Monomer. Requires Mg(2+) as cofactor.

It catalyses the reaction adenosine(37) in tRNA + dimethylallyl diphosphate = N(6)-dimethylallyladenosine(37) in tRNA + diphosphate. Functionally, catalyzes the transfer of a dimethylallyl group onto the adenine at position 37 in tRNAs that read codons beginning with uridine, leading to the formation of N6-(dimethylallyl)adenosine (i(6)A). The sequence is that of tRNA dimethylallyltransferase from Thermosynechococcus vestitus (strain NIES-2133 / IAM M-273 / BP-1).